Here is a 280-residue protein sequence, read N- to C-terminus: Acetyl-coenzyme A carboxylase carboxyl transferase subunit beta (280 aa).

In terms of domain architecture, CoA carboxyltransferase N-terminal spans 25 to 280; sequence VMRECPICHA…RLHTKENAYG (256 aa). Residues C29, C32, C47, and C50 each coordinate Zn(2+). The segment at 29–50 adopts a C4-type zinc-finger fold; that stretch reads CPICHAKFLSMRLGRDHTCPKC.

Belongs to the AccD/PCCB family. Acetyl-CoA carboxylase is a heterohexamer composed of biotin carboxyl carrier protein (AccB), biotin carboxylase (AccC) and two subunits each of ACCase subunit alpha (AccA) and ACCase subunit beta (AccD). Zn(2+) serves as cofactor.

The protein localises to the cytoplasm. It carries out the reaction N(6)-carboxybiotinyl-L-lysyl-[protein] + acetyl-CoA = N(6)-biotinyl-L-lysyl-[protein] + malonyl-CoA. It participates in lipid metabolism; malonyl-CoA biosynthesis; malonyl-CoA from acetyl-CoA: step 1/1. Functionally, component of the acetyl coenzyme A carboxylase (ACC) complex. Biotin carboxylase (BC) catalyzes the carboxylation of biotin on its carrier protein (BCCP) and then the CO(2) group is transferred by the transcarboxylase to acetyl-CoA to form malonyl-CoA. This Lactobacillus helveticus (strain DPC 4571) protein is Acetyl-coenzyme A carboxylase carboxyl transferase subunit beta.